Reading from the N-terminus, the 341-residue chain is Ribulose-5-phosphate reductase (341 aa).

Residues Cys38, His64, Glu65, and Glu144 each coordinate Zn(2+).

It belongs to the zinc-containing alcohol dehydrogenase family. Zn(2+) serves as cofactor.

The enzyme catalyses D-ribitol 5-phosphate + NADP(+) = D-ribulose 5-phosphate + NADPH + H(+). The protein operates within cell wall biogenesis; poly(ribitol phosphate) teichoic acid biosynthesis. Functionally, catalyzes the NADPH dependent reduction of D-ribulose 5-phosphate to D-ribitol 5-phosphate. This Bacillus spizizenii (strain ATCC 23059 / NRRL B-14472 / W23) (Bacillus subtilis subsp. spizizenii) protein is Ribulose-5-phosphate reductase.